A 248-amino-acid polypeptide reads, in one-letter code: Carbohydrate deacetylase 2 (248 aa).

His-59 and His-123 together coordinate Mg(2+).

This sequence belongs to the YdjC deacetylase family. In terms of assembly, homodimer. Mg(2+) is required as a cofactor.

In terms of biological role, probably catalyzes the deacetylation of acetylated carbohydrates an important step in the degradation of oligosaccharides. This is Carbohydrate deacetylase 2 from Listeria innocua serovar 6a (strain ATCC BAA-680 / CLIP 11262).